The chain runs to 604 residues: Cytosolic Fe-S cluster assembly factor nar1 (604 aa).

6 residues coordinate [4Fe-4S] cluster: Cys20, Cys62, Cys65, Cys68, Cys215, and Cys270. The interval 434 to 461 (LPGAKPAVRPAAGRRQPMSRNAVSTGSS) is disordered. Residues 451-461 (MSRNAVSTGSS) are compositionally biased toward polar residues. The [4Fe-4S] cluster site is built by Cys473 and Cys477.

Belongs to the NARF family.

In terms of biological role, component of the cytosolic Fe/S protein assembly machinery. Required for maturation of extramitochondrial Fe/S proteins. May play a role in the transfer of pre-assembled Fe/S clusters to target apoproteins. In Penicillium rubens (strain ATCC 28089 / DSM 1075 / NRRL 1951 / Wisconsin 54-1255) (Penicillium chrysogenum), this protein is Cytosolic Fe-S cluster assembly factor nar1 (nar1).